Here is a 200-residue protein sequence, read N- to C-terminus: dITP/XTP pyrophosphatase (200 aa).

8–13 (TRNAGK) lines the substrate pocket. The active-site Proton acceptor is Asp-72. Asp-72 serves as a coordination point for Mg(2+). Substrate is bound by residues Ser-73, 155 to 158 (FGYD), Lys-178, and 183 to 184 (HR).

It belongs to the HAM1 NTPase family. Homodimer. The cofactor is Mg(2+).

It catalyses the reaction XTP + H2O = XMP + diphosphate + H(+). It carries out the reaction dITP + H2O = dIMP + diphosphate + H(+). The catalysed reaction is ITP + H2O = IMP + diphosphate + H(+). Functionally, pyrophosphatase that catalyzes the hydrolysis of nucleoside triphosphates to their monophosphate derivatives, with a high preference for the non-canonical purine nucleotides XTP (xanthosine triphosphate), dITP (deoxyinosine triphosphate) and ITP. Seems to function as a house-cleaning enzyme that removes non-canonical purine nucleotides from the nucleotide pool, thus preventing their incorporation into DNA/RNA and avoiding chromosomal lesions. The chain is dITP/XTP pyrophosphatase from Streptomyces avermitilis (strain ATCC 31267 / DSM 46492 / JCM 5070 / NBRC 14893 / NCIMB 12804 / NRRL 8165 / MA-4680).